The primary structure comprises 245 residues: tRNA1(Val) (adenine(37)-N6)-methyltransferase (245 aa).

This sequence belongs to the methyltransferase superfamily. tRNA (adenine-N(6)-)-methyltransferase family.

It is found in the cytoplasm. It carries out the reaction adenosine(37) in tRNA1(Val) + S-adenosyl-L-methionine = N(6)-methyladenosine(37) in tRNA1(Val) + S-adenosyl-L-homocysteine + H(+). Specifically methylates the adenine in position 37 of tRNA(1)(Val) (anticodon cmo5UAC). The sequence is that of tRNA1(Val) (adenine(37)-N6)-methyltransferase from Klebsiella pneumoniae subsp. pneumoniae (strain ATCC 700721 / MGH 78578).